A 298-amino-acid chain; its full sequence is Lipoyl synthase 1 (298 aa).

[4Fe-4S] cluster is bound by residues Cys34, Cys39, Cys45, Cys60, Cys64, Cys67, and Ser274. Residues Phe46–Leu263 enclose the Radical SAM core domain. A disordered region spans residues Ala277 to Glu298.

The protein belongs to the radical SAM superfamily. Lipoyl synthase family. [4Fe-4S] cluster serves as cofactor.

It is found in the cytoplasm. The enzyme catalyses [[Fe-S] cluster scaffold protein carrying a second [4Fe-4S](2+) cluster] + N(6)-octanoyl-L-lysyl-[protein] + 2 oxidized [2Fe-2S]-[ferredoxin] + 2 S-adenosyl-L-methionine + 4 H(+) = [[Fe-S] cluster scaffold protein] + N(6)-[(R)-dihydrolipoyl]-L-lysyl-[protein] + 4 Fe(3+) + 2 hydrogen sulfide + 2 5'-deoxyadenosine + 2 L-methionine + 2 reduced [2Fe-2S]-[ferredoxin]. The protein operates within protein modification; protein lipoylation via endogenous pathway; protein N(6)-(lipoyl)lysine from octanoyl-[acyl-carrier-protein]: step 2/2. In terms of biological role, catalyzes the radical-mediated insertion of two sulfur atoms into the C-6 and C-8 positions of the octanoyl moiety bound to the lipoyl domains of lipoate-dependent enzymes, thereby converting the octanoylated domains into lipoylated derivatives. This Gloeobacter violaceus (strain ATCC 29082 / PCC 7421) protein is Lipoyl synthase 1.